Here is a 157-residue protein sequence, read N- to C-terminus: Phosphopantetheine adenylyltransferase (157 aa).

Ser-9 contributes to the substrate binding site. Residues 9–10 and His-17 each bind ATP; that span reads SF. Residues Lys-41, Leu-74, and Lys-88 each contribute to the substrate site. ATP-binding positions include 89–91, Glu-99, and 123–129; these read GLR and YTHVSSS.

Belongs to the bacterial CoaD family. As to quaternary structure, homohexamer. Mg(2+) serves as cofactor.

It localises to the cytoplasm. The catalysed reaction is (R)-4'-phosphopantetheine + ATP + H(+) = 3'-dephospho-CoA + diphosphate. It participates in cofactor biosynthesis; coenzyme A biosynthesis; CoA from (R)-pantothenate: step 4/5. Functionally, reversibly transfers an adenylyl group from ATP to 4'-phosphopantetheine, yielding dephospho-CoA (dPCoA) and pyrophosphate. The protein is Phosphopantetheine adenylyltransferase of Micrococcus luteus (strain ATCC 4698 / DSM 20030 / JCM 1464 / CCM 169 / CCUG 5858 / IAM 1056 / NBRC 3333 / NCIMB 9278 / NCTC 2665 / VKM Ac-2230) (Micrococcus lysodeikticus).